Consider the following 177-residue polypeptide: Isopentenyl-diphosphate Delta-isomerase 2 (177 aa).

Residues H24 and H30 each contribute to the Mn(2+) site. The 133-residue stretch at 28–160 folds into the Nudix hydrolase domain; the sequence is MLHRAFSIFV…PDVYTVWFKK (133 aa). C65 is a catalytic residue. Residue C65 coordinates Mg(2+). H67 contributes to the Mn(2+) binding site. Residue E85 participates in Mg(2+) binding. Positions 110 and 112 each coordinate Mn(2+). E112 is an active-site residue.

This sequence belongs to the IPP isomerase type 1 family. As to quaternary structure, homodimer. It depends on Mg(2+) as a cofactor. Requires Mn(2+) as cofactor.

The protein localises to the cytoplasm. It catalyses the reaction isopentenyl diphosphate = dimethylallyl diphosphate. It functions in the pathway isoprenoid biosynthesis; dimethylallyl diphosphate biosynthesis; dimethylallyl diphosphate from isopentenyl diphosphate: step 1/1. Its function is as follows. Catalyzes the 1,3-allylic rearrangement of the homoallylic substrate isopentenyl (IPP) to its highly electrophilic allylic isomer, dimethylallyl diphosphate (DMAPP). In Photorhabdus laumondii subsp. laumondii (strain DSM 15139 / CIP 105565 / TT01) (Photorhabdus luminescens subsp. laumondii), this protein is Isopentenyl-diphosphate Delta-isomerase 2.